The primary structure comprises 72 residues: Protein SlyX homolog (72 aa).

Positions 53 to 72 are disordered; it reads KDISPSNIRREEEETPPPHY.

Belongs to the SlyX family.

The protein is Protein SlyX homolog of Marinobacter nauticus (strain ATCC 700491 / DSM 11845 / VT8) (Marinobacter aquaeolei).